The sequence spans 677 residues: Epithelial splicing regulatory protein 1 (677 aa).

3 RRM domains span residues 225 to 302 (TVVR…KATG), 326 to 406 (VIVR…RSTA), and 445 to 525 (DCVR…QCSA). Serine 543 bears the Phosphoserine mark. Arginine 578 is modified (omega-N-methylarginine).

This sequence belongs to the ESRP family.

Its subcellular location is the nucleus. MRNA splicing factor that regulates the formation of epithelial cell-specific isoforms. Specifically regulates the expression of FGFR2-IIIb, an epithelial cell-specific isoform of FGFR2. Also regulates the splicing of CD44, CTNND1, ENAH, 3 transcripts that undergo changes in splicing during the epithelial-to-mesenchymal transition (EMT). Acts by directly binding specific sequences in mRNAs. Binds the GU-rich sequence motifs in the ISE/ISS-3, a cis-element regulatory region present in the mRNA of FGFR2. Regulates splicing and expression of genes involved in inner ear development, auditory hair cell differentiation, and cell fate specification in the cochlear epithelium. This Rattus norvegicus (Rat) protein is Epithelial splicing regulatory protein 1 (Esrp1).